Here is a 232-residue protein sequence, read N- to C-terminus: Orotidine 5'-phosphate decarboxylase (232 aa).

Substrate-binding positions include Asp-13, Lys-35, 62-71, Thr-121, Arg-182, Gln-191, Gly-211, and Arg-212; that span reads DLKFHDIPNT. Residue Lys-64 is the Proton donor of the active site.

It belongs to the OMP decarboxylase family. Type 1 subfamily. Homodimer.

The catalysed reaction is orotidine 5'-phosphate + H(+) = UMP + CO2. It functions in the pathway pyrimidine metabolism; UMP biosynthesis via de novo pathway; UMP from orotate: step 2/2. In terms of biological role, catalyzes the decarboxylation of orotidine 5'-monophosphate (OMP) to uridine 5'-monophosphate (UMP). This is Orotidine 5'-phosphate decarboxylase from Teredinibacter turnerae (strain ATCC 39867 / T7901).